A 199-amino-acid polypeptide reads, in one-letter code: Prolactin-1 (199 aa).

Cystine bridges form between cysteine 4/cysteine 11, cysteine 58/cysteine 174, and cysteine 191/cysteine 199. Residue asparagine 60 is glycosylated (N-linked (GlcNAc...) asparagine).

Belongs to the somatotropin/prolactin family. In terms of processing, glycosylated.

It localises to the secreted. The protein is Prolactin-1 of Crocodylus novaeguineae (Crocodile).